Reading from the N-terminus, the 87-residue chain is UPF0175 protein AF_0597 (87 aa).

It belongs to the UPF0175 family.

This chain is UPF0175 protein AF_0597, found in Archaeoglobus fulgidus (strain ATCC 49558 / DSM 4304 / JCM 9628 / NBRC 100126 / VC-16).